A 446-amino-acid polypeptide reads, in one-letter code: Probable D-serine dehydratase (446 aa).

At Lys-116 the chain carries N6-(pyridoxal phosphate)lysine.

This sequence belongs to the serine/threonine dehydratase family. DsdA subfamily. Requires pyridoxal 5'-phosphate as cofactor.

It carries out the reaction D-serine = pyruvate + NH4(+). This chain is Probable D-serine dehydratase, found in Bacillus thuringiensis (strain Al Hakam).